A 382-amino-acid chain; its full sequence is Serine/threonine-protein phosphatase 2A activator 2 (382 aa).

The disordered stretch occupies residues 363–382; sequence SHKGVPTLGNRPGIKPIPFD.

It belongs to the PTPA-type PPIase family.

It is found in the cytoplasm. It carries out the reaction [protein]-peptidylproline (omega=180) = [protein]-peptidylproline (omega=0). PPIases accelerate the folding of proteins. It catalyzes the cis-trans isomerization of proline imidic peptide bonds in oligopeptides. Acts as a regulatory subunit for PP2A-like phosphatases modulating their activity or substrate specificity, probably by inducing a conformational change in the catalytic subunit, a direct target of the PPIase. Can reactivate inactive phosphatase PP2A-phosphatase methylesterase complexes (PP2Ai) in presence of ATP and Mg(2+) by dissociating the inactive form from the complex. This Cryptococcus neoformans var. neoformans serotype D (strain B-3501A) (Filobasidiella neoformans) protein is Serine/threonine-protein phosphatase 2A activator 2 (RRD2).